Here is an 80-residue protein sequence, read N- to C-terminus: Large ribosomal subunit protein uL24 (80 aa).

The protein belongs to the universal ribosomal protein uL24 family. In terms of assembly, part of the 50S ribosomal subunit.

Its function is as follows. One of two assembly initiator proteins, it binds directly to the 5'-end of the 23S rRNA, where it nucleates assembly of the 50S subunit. Functionally, one of the proteins that surrounds the polypeptide exit tunnel on the outside of the subunit. The chain is Large ribosomal subunit protein uL24 from Chlorobaculum tepidum (strain ATCC 49652 / DSM 12025 / NBRC 103806 / TLS) (Chlorobium tepidum).